Here is a 213-residue protein sequence, read N- to C-terminus: Probable anti-sigma-F factor NrsF (213 aa).

A run of 6 helical transmembrane segments spans residues 27–47, 51–71, 91–111, 126–146, 159–179, and 187–207; these read ALAIGWGAAGATLLMLALLQV, LGLALLLPMFWVKVGFVTCLA, VPAALGLPVLGMWAIAAFTLI, TWKSCPLLIAMLSVPVFAAVL, LAGFAAGLLAGAVAAVVYCLH, and FIGFWYLLGMLIPAAVGVLLG.

This sequence belongs to the NrsF anti-sigma-F factor family.

The protein resides in the cell inner membrane. Probably an anti-sigma factor for extracytoplasmic function (ECF) sigma factor sigma-F (SigF), which responds to (hypo)chlorite. ECF sigma factors are held in an inactive form by a cognate anti-sigma factor. This chain is Probable anti-sigma-F factor NrsF, found in Azospira oryzae (strain ATCC BAA-33 / DSM 13638 / PS) (Dechlorosoma suillum).